Here is a 162-residue protein sequence, read N- to C-terminus: Phosphopantetheine adenylyltransferase (162 aa).

T9 contacts substrate. Residues 9–10 and H17 contribute to the ATP site; that span reads TF. Substrate contacts are provided by K41, L73, and R87. Residues 88 to 90, E98, and 123 to 129 each bind ATP; these read GLR and FAFLSST.

The protein belongs to the bacterial CoaD family. Homohexamer. Mg(2+) serves as cofactor.

It localises to the cytoplasm. It catalyses the reaction (R)-4'-phosphopantetheine + ATP + H(+) = 3'-dephospho-CoA + diphosphate. It participates in cofactor biosynthesis; coenzyme A biosynthesis; CoA from (R)-pantothenate: step 4/5. Reversibly transfers an adenylyl group from ATP to 4'-phosphopantetheine, yielding dephospho-CoA (dPCoA) and pyrophosphate. This chain is Phosphopantetheine adenylyltransferase, found in Vibrio atlanticus (strain LGP32) (Vibrio splendidus (strain Mel32)).